The primary structure comprises 60 residues: UPF0391 membrane protein CCNA_00709 (60 aa).

2 consecutive transmembrane segments (helical) span residues 4 to 24 and 33 to 53; these read WAIILAIVALIAGALGFSGLA and ILFFLFLVGFVLVLLLGGTVF.

Belongs to the UPF0391 family.

The protein resides in the cell membrane. The protein is UPF0391 membrane protein CCNA_00709 of Caulobacter vibrioides (strain NA1000 / CB15N) (Caulobacter crescentus).